The sequence spans 298 residues: Ribosomal protein uL3 glutamine methyltransferase (298 aa).

It belongs to the protein N5-glutamine methyltransferase family. PrmB subfamily.

It catalyses the reaction L-glutaminyl-[ribosomal protein uL3] + S-adenosyl-L-methionine = N(5)-methyl-L-glutaminyl-[ribosomal protein uL3] + S-adenosyl-L-homocysteine + H(+). Functionally, methylates large ribosomal subunit protein uL3 on a specific glutamine residue. In Bordetella pertussis (strain Tohama I / ATCC BAA-589 / NCTC 13251), this protein is Ribosomal protein uL3 glutamine methyltransferase.